A 379-amino-acid chain; its full sequence is Chaperone protein DnaJ (379 aa).

One can recognise a J domain in the interval 5–70 (DYYETLEVSQ…QKRAAYDQYG (66 aa)). Residues 135–213 (GKSLEIKVPT…CRGQGRVEKT (79 aa)) form a CR-type zinc finger. Positions 148, 151, 165, 168, 187, 190, 201, and 204 each coordinate Zn(2+). CXXCXGXG motif repeat units follow at residues 148–155 (CEPCDGSG), 165–172 (CSTCHGHG), 187–194 (CPTCSGKG), and 201–208 (CTSCRGQG).

It belongs to the DnaJ family. In terms of assembly, homodimer. Zn(2+) serves as cofactor.

Its subcellular location is the cytoplasm. Functionally, participates actively in the response to hyperosmotic and heat shock by preventing the aggregation of stress-denatured proteins and by disaggregating proteins, also in an autonomous, DnaK-independent fashion. Unfolded proteins bind initially to DnaJ; upon interaction with the DnaJ-bound protein, DnaK hydrolyzes its bound ATP, resulting in the formation of a stable complex. GrpE releases ADP from DnaK; ATP binding to DnaK triggers the release of the substrate protein, thus completing the reaction cycle. Several rounds of ATP-dependent interactions between DnaJ, DnaK and GrpE are required for fully efficient folding. Also involved, together with DnaK and GrpE, in the DNA replication of plasmids through activation of initiation proteins. This chain is Chaperone protein DnaJ, found in Colwellia maris.